Consider the following 328-residue polypeptide: Diacetylchitobiose uptake system permease protein DasB (328 aa).

Residues 1 to 27 (MTVQTERPPSGPSDVRKADGGGTGGTR) form a disordered region. A run of 6 helical transmembrane segments spans residues 36 to 56 (ALAP…LLGW), 104 to 124 (IIFT…IGLL), 134 to 154 (FVLM…ATTV), 188 to 208 (FSTF…FVAI), 247 to 267 (FLYA…VQVY), and 297 to 317 (MGAA…AYYL). The ABC transmembrane type-1 domain occupies 100-316 (TVRSIIFTAV…LILLGLTAYY (217 aa)).

Belongs to the binding-protein-dependent transport system permease family. In terms of assembly, the complex is composed of two ATP-binding proteins (MsiK), two transmembrane proteins (DasB and DasC) and a solute-binding protein (DasA).

It is found in the cell membrane. In terms of biological role, part of the ABC transporter complex DasABC-MsiK involved in N,N'-diacetylchitobiose ((GlcNAc)2) uptake. Responsible for the translocation of the substrate across the membrane. This is Diacetylchitobiose uptake system permease protein DasB from Streptomyces coelicolor (strain ATCC BAA-471 / A3(2) / M145).